Consider the following 37-residue polypeptide: Non-specific lipid-transfer protein P4 (37 aa).

This sequence belongs to the plant LTP family.

Its subcellular location is the secreted. In terms of biological role, plant non-specific lipid-transfer proteins transfer phospholipids as well as galactolipids across membranes. May play a role in wax or cutin deposition in the cell walls of expanding epidermal cells and certain secretory tissues. The protein is Non-specific lipid-transfer protein P4 of Vitis sp. (Grape).